The primary structure comprises 86 residues: Small ribosomal subunit protein bS20 (86 aa).

The tract at residues 1-25 (MANIKSQQKRNRTNERARLRNKAVK) is disordered.

Belongs to the bacterial ribosomal protein bS20 family.

Functionally, binds directly to 16S ribosomal RNA. The polypeptide is Small ribosomal subunit protein bS20 (Mycobacterium bovis (strain ATCC BAA-935 / AF2122/97)).